We begin with the raw amino-acid sequence, 240 residues long: Protein unc-119 homolog A (240 aa).

A compositionally biased stretch (gly residues) spans 1–12 (MKVKKGGGGTGP). The segment at 1 to 62 (MKVKKGGGGT…PLQGKQPIGP (62 aa)) is disordered. Residues Ser37, Ser39, and Ser41 each carry the phosphoserine; by CK2 modification. Tyr131 provides a ligand contact to tetradecanoate.

This sequence belongs to the PDE6D/unc-119 family. Interacts with CABP4; in the absence of calcium. May interact with GTP-bound ARL1. Interacts with ARL2 and ARL3 (GTP-bound forms); this promotes the release of myristoylated cargo proteins. Found in a complex with ARL3, RP2 and UNC119; RP2 induces hydrolysis of GTP ARL3 in the complex, leading to the release of UNC119. Interacts with NPHP3 (when myristoylated). Interacts with CYS1 (when myristoylated). Interacts with MACIR; interaction only takes place when UNC119 is not liganded with myristoylated proteins. Interacts with ARL1 and ARL3 GTP-bound forms. Interacts with ARL2. Interacts with ARL2. Interacts with LCK; this interaction plays a crucial role in activation of LCK. Interacts with FYN. Interacts with RAB11A; in a cell cycle-dependent manner. Interacts with LYN (via SH2 and SH3 domains); leading to LYN activation. Interacts with DNM1; leading to a decrease of DNM1 GTPase activity. Found in a complex with ABL1, ABL2, CRK and UNC119; leading to the inhibition of CRK phosphorylation by ABL kinases. Interacts with CD44. Interacts with KLHL18 (via kelch repeats). Interacts with PPP3CA, PPP3CB and PPP3CC. Interacts with USP48; this interaction promotes UNC119 stability. Phosphorylation suppresses its interaction with KLHL18 and down-regulates its KLHL18-mediated degradation. Phosphorylated more under light conditions than dark conditions. Dephosphorylated by calcineurin.

Its subcellular location is the cytoplasm. It localises to the cytoskeleton. It is found in the microtubule organizing center. The protein resides in the centrosome. The protein localises to the spindle. Its subcellular location is the spindle pole. In terms of biological role, involved in synaptic functions in photoreceptor cells, the signal transduction in immune cells as a Src family kinase activator, endosome recycling, the uptake of bacteria and endocytosis, protein trafficking in sensory neurons and as lipid-binding chaperone with specificity for a diverse subset of myristoylated proteins. Specifically binds the myristoyl moiety of a subset of N-terminally myristoylated proteins and is required for their localization. Binds myristoylated GNAT1 and is required for G-protein localization and trafficking in sensory neurons. Probably plays a role in trafficking proteins in photoreceptor cells. Plays important roles in mediating Src family kinase signals for the completion of cytokinesis via RAB11A. The polypeptide is Protein unc-119 homolog A (Unc119) (Rattus norvegicus (Rat)).